The chain runs to 705 residues: Elongation factor G 2 (705 aa).

A tr-type G domain is found at 8-288 (ERYRNIGISA…AVIDYLPSPA (281 aa)). GTP contacts are provided by residues 17 to 24 (AHIDAGKT), 86 to 90 (DTPGH), and 140 to 143 (NKMD).

It belongs to the TRAFAC class translation factor GTPase superfamily. Classic translation factor GTPase family. EF-G/EF-2 subfamily.

The protein localises to the cytoplasm. Catalyzes the GTP-dependent ribosomal translocation step during translation elongation. During this step, the ribosome changes from the pre-translocational (PRE) to the post-translocational (POST) state as the newly formed A-site-bound peptidyl-tRNA and P-site-bound deacylated tRNA move to the P and E sites, respectively. Catalyzes the coordinated movement of the two tRNA molecules, the mRNA and conformational changes in the ribosome. In Bordetella parapertussis (strain 12822 / ATCC BAA-587 / NCTC 13253), this protein is Elongation factor G 2.